A 177-amino-acid chain; its full sequence is Peptide methionine sulfoxide reductase MsrA (177 aa).

The active site involves Cys14.

Belongs to the MsrA Met sulfoxide reductase family.

It carries out the reaction L-methionyl-[protein] + [thioredoxin]-disulfide + H2O = L-methionyl-(S)-S-oxide-[protein] + [thioredoxin]-dithiol. The catalysed reaction is [thioredoxin]-disulfide + L-methionine + H2O = L-methionine (S)-S-oxide + [thioredoxin]-dithiol. In terms of biological role, has an important function as a repair enzyme for proteins that have been inactivated by oxidation. Catalyzes the reversible oxidation-reduction of methionine sulfoxide in proteins to methionine. The sequence is that of Peptide methionine sulfoxide reductase MsrA from Bacillus velezensis (strain DSM 23117 / BGSC 10A6 / LMG 26770 / FZB42) (Bacillus amyloliquefaciens subsp. plantarum).